Reading from the N-terminus, the 415-residue chain is Zona pellucida-like domain-containing protein 1 (415 aa).

A signal peptide spans 1-19; the sequence is MEPIWLLLLLAIFTVSVSA. At 20–372 the chain is on the extracellular side; it reads QFNGYNCDAN…QQFQINSVTS (353 aa). The region spanning 43-320 is the ZP domain; the sequence is YCGVQTITMK…PTCHNRDRRD (278 aa). Cystine bridges form between Cys44/Cys155, Cys79/Cys104, Cys235/Cys296, and Cys255/Cys313. The chain crosses the membrane as a helical span at residues 373-393; that stretch reads ALISGVVILGATSLSFFIIAL. Residues 394–415 are Cytoplasmic-facing; sequence TLLNRKKQNSLVLCGIRNPVFN.

Proteolytically cleaved before the transmembrane segment to yield the secreted form found in the extracellular matrix of the cupula.

The protein resides in the cytoplasmic vesicle membrane. The protein localises to the secreted. It localises to the extracellular space. It is found in the extracellular matrix. In terms of biological role, glycoprotein which is a component of the gelatinous extracellular matrix in the cupulae of the vestibular organ. The polypeptide is Zona pellucida-like domain-containing protein 1 (zpld1) (Xenopus laevis (African clawed frog)).